The chain runs to 152 residues: MFRTAVRNYSSRVGQKFQSLEQIKEYLKKPTWDTKTLLKGSQKSLEIDTPKLHRLLQLSGLSTDLDAGKERQLLNDLNAQLTMMNKLQEIECKEFDLIETQHSPLKFQDIRNATGELRQSSKKGETGQWNPLDLASVKSEGFYVVNEKLGKE.

This sequence belongs to the GatF family. As to quaternary structure, subunit of the heterotrimeric GatFAB amidotransferase (AdT) complex, composed of A, B and F subunits.

It is found in the mitochondrion inner membrane. It catalyses the reaction L-glutamyl-tRNA(Gln) + L-glutamine + ATP + H2O = L-glutaminyl-tRNA(Gln) + L-glutamate + ADP + phosphate + H(+). Its function is as follows. Allows the formation of correctly charged Gln-tRNA(Gln) through the transamidation of misacylated Glu-tRNA(Gln) in the mitochondria. The reaction takes place in the presence of glutamine and ATP through an activated gamma-phospho-Glu-tRNA(Gln). Required for proper protein synthesis within the mitochondrion. The polypeptide is Glutamyl-tRNA(Gln) amidotransferase subunit F, mitochondrial (Komagataella phaffii (strain GS115 / ATCC 20864) (Yeast)).